The following is a 271-amino-acid chain: Formamidopyrimidine-DNA glycosylase (271 aa).

Catalysis depends on Pro-2, which acts as the Schiff-base intermediate with DNA. Catalysis depends on Glu-3, which acts as the Proton donor. The active-site Proton donor; for beta-elimination activity is the Lys-57. The DNA site is built by His-90, Arg-109, and Lys-151. An FPG-type zinc finger spans residues 236 to 270 (HVYGRGGETCTSCGNLLSEIRLGQRTTVFCGICQT). Arg-260 functions as the Proton donor; for delta-elimination activity in the catalytic mechanism.

This sequence belongs to the FPG family. Monomer. It depends on Zn(2+) as a cofactor.

The enzyme catalyses Hydrolysis of DNA containing ring-opened 7-methylguanine residues, releasing 2,6-diamino-4-hydroxy-5-(N-methyl)formamidopyrimidine.. The catalysed reaction is 2'-deoxyribonucleotide-(2'-deoxyribose 5'-phosphate)-2'-deoxyribonucleotide-DNA = a 3'-end 2'-deoxyribonucleotide-(2,3-dehydro-2,3-deoxyribose 5'-phosphate)-DNA + a 5'-end 5'-phospho-2'-deoxyribonucleoside-DNA + H(+). In terms of biological role, involved in base excision repair of DNA damaged by oxidation or by mutagenic agents. Acts as a DNA glycosylase that recognizes and removes damaged bases. Has a preference for oxidized purines, such as 7,8-dihydro-8-oxoguanine (8-oxoG). Has AP (apurinic/apyrimidinic) lyase activity and introduces nicks in the DNA strand. Cleaves the DNA backbone by beta-delta elimination to generate a single-strand break at the site of the removed base with both 3'- and 5'-phosphates. The polypeptide is Formamidopyrimidine-DNA glycosylase (Shewanella baltica (strain OS155 / ATCC BAA-1091)).